Here is a 366-residue protein sequence, read N- to C-terminus: Homeobox-leucine zipper protein HOX21 (366 aa).

Disordered regions lie at residues 25–81 and 94–132; these read QQAA…SSAQ and MLGKRPMSYGDGGGGGDEVNGGGEDELSDDGSQAGEKKR. Residues 36-48 show a composition bias toward basic residues; the sequence is HHHHHHHGHHGHH. The segment covering 62-74 has biased composition (pro residues); that stretch reads GPPPPPPPHPHNP. Residues 103–115 show a composition bias toward gly residues; sequence GDGGGGGDEVNGG. The homeobox DNA-binding region spans 127 to 186; sequence AGEKKRRLNVEQVRTLEKNFELGNKLEPERKMQLARALGLQPRQVAIWFQNRRARWKTKQ. Residues 185–229 are leucine-zipper; that stretch reads KQLEKDYDALKRQLDAVKAENDALLNHNKKLQAEIVALKGREAAS. 2 disordered regions span residues 239-287 and 312-336; these read EASC…GGGG and LHSSSGGAGGPKMEHHGGGGNVQAA. Positions 240-252 are enriched in polar residues; the sequence is ASCSNRSENSSEI.

Belongs to the HD-ZIP homeobox family. Class I subfamily. Expressed in seedlings, roots, stems, leaf blades and panicles.

It localises to the nucleus. Functionally, probable transcription factor. This is Homeobox-leucine zipper protein HOX21 (HOX21) from Oryza sativa subsp. japonica (Rice).